A 440-amino-acid polypeptide reads, in one-letter code: Origin recognition complex subunit 4 (440 aa).

Residue G64–S71 coordinates ATP.

The protein belongs to the ORC4 family. In terms of assembly, ORC is composed of six subunits.

The protein resides in the nucleus. Component of the origin recognition complex (ORC) that binds origins of replication. DNA-binding is ATP-dependent, however specific DNA sequences that define origins of replication have not been identified so far. ORC is required to assemble the pre-replication complex necessary to initiate DNA replication. The polypeptide is Origin recognition complex subunit 4 (orcD) (Dictyostelium discoideum (Social amoeba)).